Here is a 393-residue protein sequence, read N- to C-terminus: MTSYSDKGEKPERGRFLHFHSVTFWVGNAKQAASYYCSKIGFEPLAYKGLETGSREVVSHVVKQDKIVFVFSSALNPWNKEMGDHLVKHGDGVKDIAFEVEDCDYIVQKARERGAIIVREEVCCAADVRGHHTPLDRARQVWEGTLVEKMTFCLDSRPQPSQTLLHRLLLSKLPKCGLEIIDHIVGNQPDQEMESASQWYMRNLQFHRFWSVDDTQIHTEYSALRSVVMANYEESIKMPINEPAPGKKKSQIQEYVDYNGGAGVQHIALKTEDIITAIRSLRERGVEFLAVPFTYYKQLQEKLKSAKIRVKESIDVLEELKILVDYDEKGYLLQIFTKPMQDRPTVFLEVIQRNNHQGFGAGNFNSLFKAFEEEQELRGNLTDTDPNGVPFRL.

Thr-2 is subject to N-acetylthreonine. VOC domains are found at residues 18-152 (HFHS…KMTF) and 180-338 (IIDH…IFTK). His-183 lines the Fe cation pocket. Residues Ser-211, Ser-226, and Ser-250 each carry the phosphoserine modification. Fe cation is bound by residues His-266 and Glu-349.

This sequence belongs to the 4HPPD family. In terms of assembly, homodimer. The cofactor is Fe cation. Liver.

The protein localises to the cytoplasm. The protein resides in the endoplasmic reticulum membrane. Its subcellular location is the golgi apparatus membrane. The catalysed reaction is 3-(4-hydroxyphenyl)pyruvate + O2 = homogentisate + CO2. It participates in amino-acid degradation; L-phenylalanine degradation; acetoacetate and fumarate from L-phenylalanine: step 3/6. Catalyzes the conversion of 4-hydroxyphenylpyruvic acid to homogentisic acid, one of the steps in tyrosine catabolism. This Sus scrofa (Pig) protein is 4-hydroxyphenylpyruvate dioxygenase (HPD).